The following is a 340-amino-acid chain: Fructoselysine 6-phosphate deglycase (340 aa).

2 consecutive SIS domains span residues 35–169 (IVEE…RLAP) and 201–331 (LGEL…PDER).

As to quaternary structure, homododecamer.

The enzyme catalyses N(6)-(6-phospho-D-fructosyl)-L-lysine + H2O = D-glucose 6-phosphate + L-lysine. It functions in the pathway carbohydrate metabolism; fructoselysine degradation; D-glucose 6-phosphate and lysine from fructoselysine: step 2/2. Its function is as follows. Catalyzes the reversible conversion of fructoselysine 6-phosphate to glucose 6-phosphate and lysine. Functions in a fructoselysine degradation pathway that allows E.coli to grow on fructoselysine or psicoselysine. The sequence is that of Fructoselysine 6-phosphate deglycase (frlB) from Escherichia coli O157:H7.